Here is a 237-residue protein sequence, read N- to C-terminus: 7-carboxy-7-deazaguanine synthase (237 aa).

Substrate contacts are provided by residues 15–17 (LSG) and R30. The 213-residue stretch at 21–233 (STGIPTIFVR…IQTHKYIWGD (213 aa)) folds into the Radical SAM core domain. 3 residues coordinate [4Fe-4S] cluster: C34, C38, and C48. Residue T50 coordinates Mg(2+). Residue T84 participates in substrate binding. S-adenosyl-L-methionine is bound at residue G86.

Belongs to the radical SAM superfamily. 7-carboxy-7-deazaguanine synthase family. In terms of assembly, homodimer. Requires [4Fe-4S] cluster as cofactor. S-adenosyl-L-methionine is required as a cofactor. It depends on Mg(2+) as a cofactor.

It catalyses the reaction 6-carboxy-5,6,7,8-tetrahydropterin + H(+) = 7-carboxy-7-deazaguanine + NH4(+). It functions in the pathway purine metabolism; 7-cyano-7-deazaguanine biosynthesis. Functionally, catalyzes the complex heterocyclic radical-mediated conversion of 6-carboxy-5,6,7,8-tetrahydropterin (CPH4) to 7-carboxy-7-deazaguanine (CDG), a step common to the biosynthetic pathways of all 7-deazapurine-containing compounds. The protein is 7-carboxy-7-deazaguanine synthase of Leptospira interrogans serogroup Icterohaemorrhagiae serovar Lai (strain 56601).